We begin with the raw amino-acid sequence, 563 residues long: Ribulokinase (563 aa).

Belongs to the ribulokinase family.

It catalyses the reaction D-ribulose + ATP = D-ribulose 5-phosphate + ADP + H(+). The catalysed reaction is L-ribulose + ATP = L-ribulose 5-phosphate + ADP + H(+). Its pathway is carbohydrate degradation; L-arabinose degradation via L-ribulose; D-xylulose 5-phosphate from L-arabinose (bacterial route): step 2/3. The polypeptide is Ribulokinase (Halalkalibacterium halodurans (strain ATCC BAA-125 / DSM 18197 / FERM 7344 / JCM 9153 / C-125) (Bacillus halodurans)).